Here is a 188-residue protein sequence, read N- to C-terminus: Peptide deformylase (188 aa).

Cysteine 109 and histidine 152 together coordinate Fe cation. The active site involves glutamate 153. Residue histidine 156 participates in Fe cation binding.

It belongs to the polypeptide deformylase family. Requires Fe(2+) as cofactor.

It carries out the reaction N-terminal N-formyl-L-methionyl-[peptide] + H2O = N-terminal L-methionyl-[peptide] + formate. Functionally, removes the formyl group from the N-terminal Met of newly synthesized proteins. Requires at least a dipeptide for an efficient rate of reaction. N-terminal L-methionine is a prerequisite for activity but the enzyme has broad specificity at other positions. The protein is Peptide deformylase of Chloroflexus aggregans (strain MD-66 / DSM 9485).